Reading from the N-terminus, the 174-residue chain is Trypsin inhibitor (174 aa).

Cystine bridges form between C40–C86 and C131–C140.

This sequence belongs to the protease inhibitor I3 (leguminous Kunitz-type inhibitor) family. In terms of assembly, heterodimer of an alpha and a beta chain linked by a disulfide bond.

Inhibits trypsin and chymotrypsin with a 1:1 stoichiometry, with dissociation constants of 1.56 nM and 120 nM respectively. Inhibits plasma kallikrein, factor XIIa and plasmin with dissociation constants of 5.0 nM, 150 nM and 18 nM respectively. Does not inhibit factor Xa, thrombin, tissue kallikrein or cysteine proteinases such as papain and bromelain. This Enterolobium contortisiliquum (Pacara earpod tree) protein is Trypsin inhibitor.